Reading from the N-terminus, the 431-residue chain is SH2 domain-containing protein 4B (431 aa).

The segment at 201–235 (QASENEEREWEEQLRRSKAADEERSRRAQRARDEY) is disordered. Over residues 211–235 (EEQLRRSKAADEERSRRAQRARDEY) the composition is skewed to basic and acidic residues. The region spanning 325–417 (WFHGIISRES…SGGELLQEPC (93 aa)) is the SH2 domain.

The protein is SH2 domain-containing protein 4B (Sh2d4b) of Mus musculus (Mouse).